Here is an 86-residue protein sequence, read N- to C-terminus: Large ribosomal subunit protein bL27 (86 aa).

Residues 1–22 are disordered; the sequence is MATKKAGGSSRNGRDSAGRRLG.

This sequence belongs to the bacterial ribosomal protein bL27 family.

The chain is Large ribosomal subunit protein bL27 from Rickettsia bellii (strain RML369-C).